The chain runs to 212 residues: Peptide methionine sulfoxide reductase MsrA (212 aa).

Residue cysteine 52 is part of the active site.

The protein belongs to the MsrA Met sulfoxide reductase family.

It catalyses the reaction L-methionyl-[protein] + [thioredoxin]-disulfide + H2O = L-methionyl-(S)-S-oxide-[protein] + [thioredoxin]-dithiol. The enzyme catalyses [thioredoxin]-disulfide + L-methionine + H2O = L-methionine (S)-S-oxide + [thioredoxin]-dithiol. In terms of biological role, has an important function as a repair enzyme for proteins that have been inactivated by oxidation. Catalyzes the reversible oxidation-reduction of methionine sulfoxide in proteins to methionine. This chain is Peptide methionine sulfoxide reductase MsrA, found in Escherichia coli (strain SMS-3-5 / SECEC).